The sequence spans 412 residues: Hyaluronidase-3 (412 aa).

The N-terminal stretch at 1-22 (MIMHLGLMMVVGLTLCLMHGQA) is a signal peptide. 5 cysteine pairs are disulfide-bonded: cysteine 42/cysteine 332, cysteine 206/cysteine 221, cysteine 357/cysteine 368, cysteine 362/cysteine 396, and cysteine 398/cysteine 407. Asparagine 69 is a glycosylation site (N-linked (GlcNAc...) asparagine). The active-site Proton donor is the glutamate 129. Asparagine 216 is a glycosylation site (N-linked (GlcNAc...) asparagine). An EGF-like domain is found at 353 to 408 (AAMACSHQRCHGHGRCARKDPGQMEAFLHLQPDDSLGAWNSFRCHCYSGWAGPTCL).

It belongs to the glycosyl hydrolase 56 family. In terms of processing, N-glycosylated. Expressed in testis, epididymal tissue, epididymal luminal fluid (ELF), acrosome-intact (AI) sperm and caput (CAP), corpus (COR) and caudal (CAU) sperm. Higher expression in sperm than testis (at protein level). Liver, kidney, skin, brain, stomach and testis. Expressed mainly in granulosa cells of the ovaries. Expressed in small and large antral follicles. Not present in theca or stroma cells. Expressed in testis and liver. Expressed in testis and CAP, COR, and CAU epididymis tissue.

Its subcellular location is the secreted. The protein localises to the cell membrane. It localises to the cytoplasmic vesicle. It is found in the secretory vesicle. The protein resides in the acrosome. Its subcellular location is the endoplasmic reticulum. The protein localises to the early endosome. It carries out the reaction Random hydrolysis of (1-&gt;4)-linkages between N-acetyl-beta-D-glucosamine and D-glucuronate residues in hyaluronate.. Functionally, facilitates sperm penetration into the layer of cumulus cells surrounding the egg by digesting hyaluronic acid. Involved in induction of the acrosome reaction in the sperm. Involved in follicular atresia, the breakdown of immature ovarian follicles that are not selected to ovulate. Induces ovarian granulosa cell apoptosis, possibly via apoptotic signaling pathway involving CASP8 and CASP3 activation, and poly(ADP-ribose) polymerase (PARP) cleavage. Has no hyaluronidase activity in embryonic fibroblasts in vitro. Has no hyaluronidase activity in granulosa cells in vitro. The protein is Hyaluronidase-3 (Hyal3) of Mus musculus (Mouse).